Consider the following 328-residue polypeptide: MSGAESYRHITVLLNEAVDALAVREDGVYVDGTFGRGGHSRLILSRLGDAGRLIVFDKDPQAIAVAEELARSDKRVGVVHGGFASFQAALDGLGIGKVDGALFDLGISSPQIDDGSRGFSFRFDAPLDMRMDTTRGMSAAEWIAVASEQDLHEVIKNYGEERFSRQIARAIVAQRAESPIDTTRKLAQIVAQNVRTRERGQDPATRTFQAVRIFINRELEEVGAVLPQVMCRLKEGGRLAVIAFHSLEDRIVKQFVKKYSQHAPLPRWAAVREADLPELPLKIVGRALKPGEAEIAANPRARSAVLRVAERTAGPIPEQSQRKTSEWQ.

S-adenosyl-L-methionine-binding positions include 37–39, Asp57, Phe83, Asp104, and Gln111; that span reads GGH.

The protein belongs to the methyltransferase superfamily. RsmH family.

It localises to the cytoplasm. The catalysed reaction is cytidine(1402) in 16S rRNA + S-adenosyl-L-methionine = N(4)-methylcytidine(1402) in 16S rRNA + S-adenosyl-L-homocysteine + H(+). Its function is as follows. Specifically methylates the N4 position of cytidine in position 1402 (C1402) of 16S rRNA. The polypeptide is Ribosomal RNA small subunit methyltransferase H (Neisseria meningitidis serogroup C / serotype 2a (strain ATCC 700532 / DSM 15464 / FAM18)).